A 352-amino-acid chain; its full sequence is Holliday junction branch migration complex subunit RuvB (352 aa).

A large ATPase domain (RuvB-L) region spans residues 4 to 191 (TDKFSAPDRV…FGIVARLEFY (188 aa)). Residues L30, R31, G72, K75, T76, T77, 138–140 (EDY), R181, Y191, and R228 each bind ATP. A Mg(2+)-binding site is contributed by T76. The tract at residues 192 to 262 (TAEELARIVT…IADAALAMLD (71 aa)) is small ATPAse domain (RuvB-S). The head domain (RuvB-H) stretch occupies residues 265–352 (RVGFDLMDRK…GDSGDLIDGE (88 aa)). Positions 301, 320, and 325 each coordinate DNA.

It belongs to the RuvB family. Homohexamer. Forms an RuvA(8)-RuvB(12)-Holliday junction (HJ) complex. HJ DNA is sandwiched between 2 RuvA tetramers; dsDNA enters through RuvA and exits via RuvB. An RuvB hexamer assembles on each DNA strand where it exits the tetramer. Each RuvB hexamer is contacted by two RuvA subunits (via domain III) on 2 adjacent RuvB subunits; this complex drives branch migration. In the full resolvosome a probable DNA-RuvA(4)-RuvB(12)-RuvC(2) complex forms which resolves the HJ.

The protein resides in the cytoplasm. It carries out the reaction ATP + H2O = ADP + phosphate + H(+). Its function is as follows. The RuvA-RuvB-RuvC complex processes Holliday junction (HJ) DNA during genetic recombination and DNA repair, while the RuvA-RuvB complex plays an important role in the rescue of blocked DNA replication forks via replication fork reversal (RFR). RuvA specifically binds to HJ cruciform DNA, conferring on it an open structure. The RuvB hexamer acts as an ATP-dependent pump, pulling dsDNA into and through the RuvAB complex. RuvB forms 2 homohexamers on either side of HJ DNA bound by 1 or 2 RuvA tetramers; 4 subunits per hexamer contact DNA at a time. Coordinated motions by a converter formed by DNA-disengaged RuvB subunits stimulates ATP hydrolysis and nucleotide exchange. Immobilization of the converter enables RuvB to convert the ATP-contained energy into a lever motion, pulling 2 nucleotides of DNA out of the RuvA tetramer per ATP hydrolyzed, thus driving DNA branch migration. The RuvB motors rotate together with the DNA substrate, which together with the progressing nucleotide cycle form the mechanistic basis for DNA recombination by continuous HJ branch migration. Branch migration allows RuvC to scan DNA until it finds its consensus sequence, where it cleaves and resolves cruciform DNA. The polypeptide is Holliday junction branch migration complex subunit RuvB (Cupriavidus pinatubonensis (strain JMP 134 / LMG 1197) (Cupriavidus necator (strain JMP 134))).